An 879-amino-acid polypeptide reads, in one-letter code: Aminopeptidase M1 (879 aa).

Residues 98–205 are required for membrane association; the sequence is HGVGVLKLGF…MSTYLVAIVV (108 aa). Substrate contacts are provided by residues Glu-138 and 271–275; that span reads GAMEN. His-307 contacts Zn(2+). The active-site Proton acceptor is the Glu-308. Zn(2+) contacts are provided by His-311 and Glu-330. The Dileucine internalization motif motif lies at 728–729; the sequence is LL.

It belongs to the peptidase M1 family. Homodimer. Interacts with N-1-naphthylphthalamic acid (NPA). Requires Zn(2+) as cofactor. In terms of tissue distribution, ubiquitous with preferential expression in 5 days-old seedlings, roots, young flowers, upper inflorescence stems, and rosette leaves.

It localises to the membrane. Its subcellular location is the microsome membrane. The protein localises to the cytoplasm. The enzyme catalyses Release of an N-terminal amino acid, Xaa-|-Yaa- from a peptide, amide or arylamide. Xaa is preferably Ala, but may be most amino acids including Pro (slow action). When a terminal hydrophobic residue is followed by a prolyl residue, the two may be released as an intact Xaa-Pro dipeptide.. Its function is as follows. Metallopeptidase that binds to the auxin transport inhibitor N-1-naphthylphthalamic acid (NPA). Required for embryonic and seedling development as well as cell cycle progression. Homodimerization is required to proper localization and activity. May play a negative role in the regulation of PIN auxin transport proteins. The polypeptide is Aminopeptidase M1 (APM1) (Arabidopsis thaliana (Mouse-ear cress)).